Reading from the N-terminus, the 444-residue chain is Cobyrinate a,c-diamide synthase (444 aa).

In terms of domain architecture, GATase cobBQ-type spans 250–438 (IIAIAQDRAF…PHIHFFGSYK (189 aa)). Cys332 acts as the Nucleophile in catalysis.

The protein belongs to the CobB/CbiA family. It depends on Mg(2+) as a cofactor.

The catalysed reaction is cob(II)yrinate + 2 L-glutamine + 2 ATP + 2 H2O = cob(II)yrinate a,c diamide + 2 L-glutamate + 2 ADP + 2 phosphate + 2 H(+). Its pathway is cofactor biosynthesis; adenosylcobalamin biosynthesis; cob(II)yrinate a,c-diamide from sirohydrochlorin (anaerobic route): step 10/10. In terms of biological role, catalyzes the ATP-dependent amidation of the two carboxylate groups at positions a and c of cobyrinate, using either L-glutamine or ammonia as the nitrogen source. The polypeptide is Cobyrinate a,c-diamide synthase (Fusobacterium nucleatum subsp. nucleatum (strain ATCC 25586 / DSM 15643 / BCRC 10681 / CIP 101130 / JCM 8532 / KCTC 2640 / LMG 13131 / VPI 4355)).